The primary structure comprises 795 residues: Phenylalanine--tRNA ligase beta subunit (795 aa).

A tRNA-binding domain is found at Ala-39–Arg-148. The B5 domain occupies Pro-401 to Asn-476. Mg(2+) contacts are provided by Asp-454, Asp-460, Glu-463, and Glu-464. One can recognise an FDX-ACB domain in the interval Ser-701–Arg-794.

This sequence belongs to the phenylalanyl-tRNA synthetase beta subunit family. Type 1 subfamily. In terms of assembly, tetramer of two alpha and two beta subunits. It depends on Mg(2+) as a cofactor.

It localises to the cytoplasm. The enzyme catalyses tRNA(Phe) + L-phenylalanine + ATP = L-phenylalanyl-tRNA(Phe) + AMP + diphosphate + H(+). This is Phenylalanine--tRNA ligase beta subunit from Shewanella oneidensis (strain ATCC 700550 / JCM 31522 / CIP 106686 / LMG 19005 / NCIMB 14063 / MR-1).